The primary structure comprises 332 residues: Cell growth regulator with RING finger domain protein 1 (332 aa).

Residues 274-309 form an RING-type zinc finger; the sequence is CVVCQNGGVNWVLLPCRHACLCDSCVRYFKQCPMCR.

The protein resides in the nucleus. It localises to the endoplasmic reticulum. Functionally, able to inhibit growth in several cell lines. In Mus musculus (Mouse), this protein is Cell growth regulator with RING finger domain protein 1 (Cgrrf1).